A 345-amino-acid chain; its full sequence is L-threonine 3-dehydrogenase (345 aa).

Cys-39 contributes to the Zn(2+) binding site. Catalysis depends on charge relay system residues Thr-41 and His-44. Zn(2+)-binding residues include His-64, Glu-65, Cys-94, Cys-97, Cys-100, and Cys-108. NAD(+)-binding positions include Ile-176, Asp-196, Arg-201, 263–265 (LGI), and 287–288 (VY).

The protein belongs to the zinc-containing alcohol dehydrogenase family. As to quaternary structure, homotetramer. It depends on Zn(2+) as a cofactor.

It is found in the cytoplasm. The catalysed reaction is L-threonine + NAD(+) = (2S)-2-amino-3-oxobutanoate + NADH + H(+). The protein operates within amino-acid degradation; L-threonine degradation via oxydo-reductase pathway; glycine from L-threonine: step 1/2. In terms of biological role, catalyzes the NAD(+)-dependent oxidation of L-threonine to 2-amino-3-ketobutyrate. The chain is L-threonine 3-dehydrogenase from Anaeromyxobacter sp. (strain K).